The primary structure comprises 404 residues: Glucosyl-3-phosphoglycerate synthase (404 aa).

D146 lines the a divalent metal cation pocket. A (2R)-3-phosphoglycerate-binding site is contributed by 188–190 (GRV). A divalent metal cation is bound at residue H270.

Belongs to the glycosyltransferase 2 family. Mn(2+) serves as cofactor. Requires Co(2+) as cofactor. Mg(2+) is required as a cofactor.

It catalyses the reaction an NDP-alpha-D-glucose + (2R)-3-phosphoglycerate = (2R)-2-O-(alpha-D-glucopyranosyl)-3-phospho-glycerate + a ribonucleoside 5'-diphosphate + H(+). Involved in the biosynthesis of 6-O-methylglucose lipopolysaccarides (MGLPs). Catalyzes the transfer of a glucose (Glc) moiety from uridine diphosphate (UDP-Glc) to the position 2 of 3-phospho-D-glycerate (3-PGA) to form glucosyl-3-phosphoglycerate (GPG). In Methanococcoides burtonii (strain DSM 6242 / NBRC 107633 / OCM 468 / ACE-M), this protein is Glucosyl-3-phosphoglycerate synthase.